The primary structure comprises 310 residues: Fructose-bisphosphate aldolase/6-deoxy-5-ketofructose 1-phosphate synthase (310 aa).

Residues 48 to 49 (DQ), H53, D57, and W180 contribute to the substrate site. The active-site Proton donor is the Y182. Substrate contacts are provided by residues R184, 213-215 (KVN), 241-243 (AGG), and 270-271 (GR). Catalysis depends on K213, which acts as the Schiff-base intermediate with dihydroxyacetone-P. The active-site Schiff-base intermediate with substrate is the K213.

This sequence belongs to the DeoC/FbaB aldolase family.

It catalyses the reaction beta-D-fructose 1,6-bisphosphate = D-glyceraldehyde 3-phosphate + dihydroxyacetone phosphate. The enzyme catalyses beta-D-fructose 1,6-bisphosphate + methylglyoxal = 1-deoxy-D-threo-hexo-2,5-diulose 6-phosphate + D-glyceraldehyde 3-phosphate. The catalysed reaction is beta-D-fructose 1-phosphate + methylglyoxal = 1-deoxy-D-threo-hexo-2,5-diulose 6-phosphate + D-glyceraldehyde. It participates in aromatic compound metabolism. Catalyzes the transaldolization of either fructose-1-P or fructose-1,6-bisphosphate with methylglyoxal to produce 6-deoxy-5-ketofructose-1-phosphate (DKFP). Also catalyzes the reversible aldol condensation of dihydroxyacetone phosphate (DHAP or glycerone-phosphate) with glyceraldehyde 3-phosphate (G3P or GAP) to produce fructose 1,6-bisphosphate (FBP). This is Fructose-bisphosphate aldolase/6-deoxy-5-ketofructose 1-phosphate synthase from Methanocaldococcus jannaschii (strain ATCC 43067 / DSM 2661 / JAL-1 / JCM 10045 / NBRC 100440) (Methanococcus jannaschii).